A 1104-amino-acid chain; its full sequence is MEPSRALLGCLASAAAAAPPGEDGAGAGAEEEEEEEEEAAAAVGPGELGCDAPLPYWTAVFEYEAAGEDELTLRLGDVVEVLSKDSQVSGDEGWWTGQLNQRVGIFPSNYVTPRSAFSSRCQPGGEDPSCYPPIQLLEIDFAELTLEEIIGIGGFGKVYRAFWIGDEVAVKAARHDPDEDISQTIENVRQEAKLFAMLKHPNIIALRGVCLKEPNLCLVMEFARGGPLNRVLSGKRIPPDILVNWAVQIARGMNYLHDEAIVPIIHRDLKSSNILILQKVENGDLSNKILKITDFGLAREWHRTTKMSAAGTYAWMAPEVIRASMFSKGSDVWSYGVLLWELLTGEVPFRGIDGLAVAYGVAMNKLALPIPSTCPEPFAKLMEDCWNPDPHSRPSFTNILDQLTTIEESGFFEMPKDSFHCLQDNWKHEIQEMFDQLRAKEKELRTWEEELTRAALQQKNQEELLRRREQELAEREIDILERELNIIIHQLCQEKPRVKKRKGKFRKSRLKLKDGNRISLPSDFQHKFTVQASPTMDKRKSLINSRSSPPASPTIIPRLRAIQLTPGESSKTWGRSSVVPKEEGEEEEKRAPKKKGRTWGPGTLGQKELASGDEGSPQRREKANGLSTPSESPHFHLGLKSLVDGYKQWSSSAPNLVKGPRSSPALPGFTSLMEMEDEDSEGPGSGESRLQHSPSQSYLCIPFPRGEDGDGPSSDGIHEEPTPVNSATSTPQLTPTNSLKRGGAHHRRCEVALLGCGAVLAATGLGFDLLEAGKCQLLPLEEPEPPAREEKKRREGLFQRSSRPRRSTSPPSRKLFKKEEPMLLLGDPSASLTLLSLSSISECNSTRSLLRSDSDEIVVYEMPVSPVEAPPLSPCTHNPLVNVRVERFKRDPNQSLTPTHVTLTTPSQPSSHRRTPSDGALKPETLLASRSPSSNGLSPSPGAGMLKTPSPSRDPGEFPRLPDPNVVFPPTPRRWNTQQDSTLERPKTLEFLPRPRPSANRQRLDPWWFVSPSHARSTSPANSSSTETPSNLDSCFASSSSTVEERPGLPALLPFQAGPLPPTERTLLDLDAEGQSQDSTVPLCRAELNTHRPAPYEIQQEFWS.

Residues alanine 12–glutamate 22 show a composition bias toward low complexity. The disordered stretch occupies residues alanine 12–glutamate 47. A compositionally biased stretch (acidic residues) spans alanine 29–alanine 39. The SH3 domain maps to alanine 52 to alanine 116. The Protein kinase domain maps to leucine 144 to phenylalanine 412. ATP contacts are provided by residues isoleucine 150–valine 158 and lysine 171. Aspartate 268 serves as the catalytic Proton acceptor. Phosphothreonine; by autocatalysis occurs at positions 304 and 305. Serine 308 carries the post-translational modification Phosphoserine; by autocatalysis. Residue threonine 312 is modified to Phosphothreonine; by autocatalysis. Leucine-zipper regions lie at residues isoleucine 430–leucine 451 and leucine 465–isoleucine 486. Disordered regions lie at residues alanine 532–histidine 636, methionine 675–glycine 742, glutamate 781–glutamate 819, and arginine 890–serine 1038. Serine 533 is subject to Phosphoserine. 2 stretches are compositionally biased toward polar residues: residues proline 566–arginine 575 and proline 723–leucine 739. Residues proline 785 to leucine 797 show a composition bias toward basic and acidic residues. Residues asparagine 893–serine 910 show a composition bias toward polar residues. Low complexity predominate over residues serine 929–glycine 944. Polar residues predominate over residues histidine 1014–serine 1038.

This sequence belongs to the protein kinase superfamily. STE Ser/Thr protein kinase family. MAP kinase kinase kinase subfamily. As to quaternary structure, homodimer. The cofactor is Mg(2+). Post-translationally, autophosphorylation on serine and threonine residues within the activation loop plays a role in enzyme activation. Thr-312 is likely to be the main autophosphorylation site. Autophosphorylation also occurs on Thr-304 and Ser-308. As to expression, expressed in epithelial tumor cell lines of colonic, breast and esophageal origin.

The enzyme catalyses L-seryl-[protein] + ATP = O-phospho-L-seryl-[protein] + ADP + H(+). It carries out the reaction L-threonyl-[protein] + ATP = O-phospho-L-threonyl-[protein] + ADP + H(+). Homodimerization via the leucine zipper domains is required for autophosphorylation of multiple sites in the activation loop and subsequent activation. Autophosphorylation at Thr-312 is the key step in activation of MAP3K9/MLK1 and is required for full phosphorylation. Autophosphorylation at Thr-304 and Ser-308 have been shown to be of secondary importance in the activation of MAP3K9/MLK1. CEP-1347 and many indolocarbazole analogs have been shown to act as inhibitors of MAP3K9/MLK1 activity. Its function is as follows. Serine/threonine kinase which acts as an essential component of the MAP kinase signal transduction pathway. Plays an important role in the cascades of cellular responses evoked by changes in the environment. Once activated, acts as an upstream activator of the MKK/JNK signal transduction cascade through the phosphorylation of MAP2K4/MKK4 and MAP2K7/MKK7 which in turn activate the JNKs. The MKK/JNK signaling pathway regulates stress response via activator protein-1 (JUN) and GATA4 transcription factors. Also plays a role in mitochondrial death signaling pathway, including the release cytochrome c, leading to apoptosis. In Homo sapiens (Human), this protein is Mitogen-activated protein kinase kinase kinase 9 (MAP3K9).